Reading from the N-terminus, the 299-residue chain is Fructose-1,6-bisphosphatase class 1 (299 aa).

Residues Glu-79, Asp-98, Leu-100, and Asp-101 each contribute to the Mg(2+) site. Substrate contacts are provided by residues 101–104 (DGSS), Tyr-207, and Lys-238. Glu-244 contacts Mg(2+).

The protein belongs to the FBPase class 1 family. In terms of assembly, homotetramer. Requires Mg(2+) as cofactor.

The protein resides in the cytoplasm. The enzyme catalyses beta-D-fructose 1,6-bisphosphate + H2O = beta-D-fructose 6-phosphate + phosphate. Its pathway is carbohydrate biosynthesis; gluconeogenesis. This is Fructose-1,6-bisphosphatase class 1 from Campylobacter curvus (strain 525.92).